The chain runs to 952 residues: Plasma membrane ATPase 4 (952 aa).

Over 1–64 (MAKAISLEEI…EKNESKILKF (64 aa)) the chain is Cytoplasmic. Residues 65-84 (LGFMWNPLSWVMEAAAVMAI) form a helical membrane-spanning segment. The Extracellular segment spans residues 85-96 (ALANGDGKPPDW). Residues 97–117 (QDFIGIICLLVINSTISFIEE) form a helical membrane-spanning segment. Residues 118–246 (NNAGNAAAAL…GHFQKVLTAI (129 aa)) lie on the Cytoplasmic side of the membrane. A helical membrane pass occupies residues 247–267 (GNFCICSIAIGMLVEIIVMYP). At 268 to 277 (IQHRKYRDGI) the chain is on the extracellular side. The chain crosses the membrane as a helical span at residues 278-299 (DNLLVLLIGGIPIAMPTVLSVT). At 300–646 (MAIGSHRLSQ…TSRAIFQRMK (347 aa)) the chain is on the cytoplasmic side. The active-site 4-aspartylphosphate intermediate is aspartate 332. The Mg(2+) site is built by aspartate 591 and aspartate 595. Residues 647–668 (NYTIYAVSITIRIVFGFMFIAL) form a helical membrane-spanning segment. Topologically, residues 669-673 (IWKYD) are extracellular. The helical transmembrane segment at 674–696 (FSAFMVLIIAILNDGTIMTISKD) threads the bilayer. At 697 to 712 (RVKPSPMPDSWKLKEI) the chain is on the cytoplasmic side. A helical transmembrane segment spans residues 713–733 (FATGVVLGGYQALMTVVFFWA). The Extracellular segment spans residues 734-754 (MHDTDFFSDKFGVKSLRNSDE). Residues 755–775 (EMMSALYLQVSIISQALIFVT) form a helical membrane-spanning segment. At 776-787 (RSRSWSFLERPG) the chain is on the cytoplasmic side. The chain crosses the membrane as a helical span at residues 788-808 (MLLVIAFMIAQLVATLIAVYA). Residues 809–817 (NWAFARVKG) are Extracellular-facing. Residues 818 to 838 (CGWGWAGVIWLYSIIFYLPLD) form a helical membrane-spanning segment. At 839 to 952 (IMKFAIRYIL…IETIQQHYTV (114 aa)) the chain is on the cytoplasmic side.

This sequence belongs to the cation transport ATPase (P-type) (TC 3.A.3) family. Type IIIA subfamily. Expressed at high levels in root, stem, leaf and flower.

It localises to the cell membrane. The enzyme catalyses ATP + H2O + H(+)(in) = ADP + phosphate + 2 H(+)(out). Functionally, the plasma membrane ATPase of plants and fungi is a hydrogen ion pump. The proton gradient it generates drives the active transport of nutrients by H(+)-symport. The resulting external acidification and/or internal alkinization may mediate growth responses. This Nicotiana plumbaginifolia (Leadwort-leaved tobacco) protein is Plasma membrane ATPase 4 (PMA4).